A 40-amino-acid polypeptide reads, in one-letter code: Large ribosomal subunit protein bL36B (40 aa).

It belongs to the bacterial ribosomal protein bL36 family.

The sequence is that of Large ribosomal subunit protein bL36B from Leifsonia xyli subsp. xyli (strain CTCB07).